The primary structure comprises 300 residues: Cathepsin B-like CP2 (300 aa).

The N-terminal stretch at 1 to 19 (MKLFLLAAAAFSAPALTVS) is a signal peptide. 3 disulfides stabilise this stretch: cysteine 88/cysteine 115, cysteine 98/cysteine 141, and cysteine 134/cysteine 177. The active site involves cysteine 101. Catalysis depends on residues histidine 245 and asparagine 266.

It belongs to the peptidase C1 family.

It is found in the vacuole. Its function is as follows. Thiol protease which is required for parasite excystation and invasion of the proximal small intestine of the human host. The sequence is that of Cathepsin B-like CP2 (CP2) from Giardia intestinalis (Giardia lamblia).